Here is a 520-residue protein sequence, read N- to C-terminus: Cholesterol side-chain cleavage enzyme, mitochondrial (520 aa).

Residues 1–39 (MLARGLALRSVLVKGCQPFLSAPRECPGHPRVGTGEGAC) constitute a mitochondrion transit peptide. Position 461 (Cys-461) interacts with heme.

Belongs to the cytochrome P450 family. As to quaternary structure, interacts with FDX1/adrenodoxin. Requires heme as cofactor.

The protein localises to the mitochondrion inner membrane. The enzyme catalyses 6 reduced [adrenodoxin] + cholesterol + 3 O2 + 6 H(+) = 4-methylpentanal + pregnenolone + 6 oxidized [adrenodoxin] + 4 H2O. It carries out the reaction 2 reduced [adrenodoxin] + cholesterol + O2 + 2 H(+) = (22R)-hydroxycholesterol + 2 oxidized [adrenodoxin] + H2O. It catalyses the reaction (22R)-hydroxycholesterol + 2 reduced [adrenodoxin] + O2 + 2 H(+) = (20R,22R)-20,22-dihydroxycholesterol + 2 oxidized [adrenodoxin] + H2O. The catalysed reaction is (20R,22R)-20,22-dihydroxycholesterol + 2 reduced [adrenodoxin] + O2 + 2 H(+) = 4-methylpentanal + pregnenolone + 2 oxidized [adrenodoxin] + 2 H2O. It functions in the pathway lipid metabolism; C21-steroid hormone metabolism. It participates in steroid metabolism; cholesterol metabolism. In terms of biological role, a cytochrome P450 monooxygenase that catalyzes the side-chain hydroxylation and cleavage of cholesterol to pregnenolone, the precursor of most steroid hormones. Catalyzes three sequential oxidation reactions of cholesterol, namely the hydroxylation at C22 followed with the hydroxylation at C20 to yield 20R,22R-hydroxycholesterol that is further cleaved between C20 and C22 to yield the C21-steroid pregnenolone and 4-methylpentanal. Mechanistically, uses molecular oxygen inserting one oxygen atom into a substrate and reducing the second into a water molecule. Two electrons are provided by NADPH via a two-protein mitochondrial transfer system comprising flavoprotein FDXR (adrenodoxin/ferredoxin reductase) and nonheme iron-sulfur protein FDX1 or FDX2 (adrenodoxin/ferredoxin). This is Cholesterol side-chain cleavage enzyme, mitochondrial (CYP11A1) from Sus scrofa (Pig).